Reading from the N-terminus, the 128-residue chain is uncharacterized protein (128 aa).

Residues 95–123 (IIDFATAKRELDRLTEEIATLKGELAQDK) adopt a coiled-coil conformation.

The protein localises to the cellular thylakoid membrane. This is an uncharacterized protein from Synechocystis sp. (strain ATCC 27184 / PCC 6803 / Kazusa).